The primary structure comprises 160 residues: Ribosomal RNA large subunit methyltransferase H (160 aa).

The S-adenosyl-L-methionine site is built by leucine 76 and glycine 108.

Belongs to the RNA methyltransferase RlmH family. Homodimer.

It is found in the cytoplasm. The catalysed reaction is pseudouridine(1915) in 23S rRNA + S-adenosyl-L-methionine = N(3)-methylpseudouridine(1915) in 23S rRNA + S-adenosyl-L-homocysteine + H(+). Functionally, specifically methylates the pseudouridine at position 1915 (m3Psi1915) in 23S rRNA. This Bradyrhizobium diazoefficiens (strain JCM 10833 / BCRC 13528 / IAM 13628 / NBRC 14792 / USDA 110) protein is Ribosomal RNA large subunit methyltransferase H.